A 375-amino-acid polypeptide reads, in one-letter code: 23S rRNA (uracil(747)-C(5))-methyltransferase RlmC (375 aa).

[4Fe-4S] cluster-binding residues include Cys3, Cys11, Cys14, and Cys87. Positions 212, 241, 262, and 307 each coordinate S-adenosyl-L-methionine. Residue Cys334 is the Nucleophile of the active site.

The protein belongs to the class I-like SAM-binding methyltransferase superfamily. RNA M5U methyltransferase family. RlmC subfamily.

The catalysed reaction is uridine(747) in 23S rRNA + S-adenosyl-L-methionine = 5-methyluridine(747) in 23S rRNA + S-adenosyl-L-homocysteine + H(+). Functionally, catalyzes the formation of 5-methyl-uridine at position 747 (m5U747) in 23S rRNA. The chain is 23S rRNA (uracil(747)-C(5))-methyltransferase RlmC from Serratia proteamaculans (strain 568).